The sequence spans 338 residues: Mitochondrial glutathione transporter SLC25A40 (338 aa).

3 Solcar repeats span residues 13 to 131, 139 to 223, and 233 to 327; these read VTPL…LSAL, NETC…LKKW, and PTFM…GKAF. The next 6 membrane-spanning stretches (helical) occupy residues 19 to 39, 103 to 123, 142 to 162, 199 to 220, 239 to 259, and 298 to 318; these read MLAS…LDVV, LWSG…IYFT, CIPI…ISPL, WAPT…YEIL, FTSG…FDVV, and GLFS…AIMI.

The protein belongs to the mitochondrial carrier (TC 2.A.29) family.

It localises to the mitochondrion inner membrane. It catalyses the reaction glutathione(in) = glutathione(out). Its function is as follows. Probable mitochondrial transporter required for glutathione import into mitochondria. Glutathione, which plays key roles in oxidative metabolism, is produced exclusively in the cytosol and is imported in many organelles. Mitochondrial glutathione is required for the activity and stability of proteins containing iron-sulfur clusters, as well as erythropoiesis. This Homo sapiens (Human) protein is Mitochondrial glutathione transporter SLC25A40.